Consider the following 246-residue polypeptide: 1-(5-phosphoribosyl)-5-[(5-phosphoribosylamino)methylideneamino] imidazole-4-carboxamide isomerase (246 aa).

Residue D8 is the Proton acceptor of the active site. The active-site Proton donor is the D129.

This sequence belongs to the HisA/HisF family.

The protein resides in the cytoplasm. It catalyses the reaction 1-(5-phospho-beta-D-ribosyl)-5-[(5-phospho-beta-D-ribosylamino)methylideneamino]imidazole-4-carboxamide = 5-[(5-phospho-1-deoxy-D-ribulos-1-ylimino)methylamino]-1-(5-phospho-beta-D-ribosyl)imidazole-4-carboxamide. It participates in amino-acid biosynthesis; L-histidine biosynthesis; L-histidine from 5-phospho-alpha-D-ribose 1-diphosphate: step 4/9. This is 1-(5-phosphoribosyl)-5-[(5-phosphoribosylamino)methylideneamino] imidazole-4-carboxamide isomerase from Methylocella silvestris (strain DSM 15510 / CIP 108128 / LMG 27833 / NCIMB 13906 / BL2).